We begin with the raw amino-acid sequence, 309 residues long: Cell division protein FtsQ (309 aa).

The Cytoplasmic portion of the chain corresponds to 1–52; the sequence is MLALRGRRGKRVRYPADGVAEADEAFVLPRPLRRGVRFLISLGAGRIRFPNH. Residues 53-74 form a helical membrane-spanning segment; that stretch reads TGTVAAAAFMVATGLYGMSLGG. Residues 75–309 are Periplasmic-facing; that stretch reads HTQSFAQVST…KMLKAQEKRI (235 aa). Residues 89-157 enclose the POTRA domain; sequence FAIEDVRVSG…GTIEVVLKER (69 aa).

This sequence belongs to the FtsQ/DivIB family. FtsQ subfamily.

Its subcellular location is the cell inner membrane. Functionally, essential cell division protein. The chain is Cell division protein FtsQ from Rhizobium meliloti (strain 1021) (Ensifer meliloti).